Reading from the N-terminus, the 440-residue chain is Lipopolysaccharide-processing protein LpsZ (440 aa).

It to E.coli capsule polysaccharide export protein KpsC.

It localises to the cytoplasm. In terms of biological role, involved in the invasion of nitrogen fixation nodules. May be involved in the biosynthesis of lipopolysaccharides as an enzyme or a regulatory protein. This chain is Lipopolysaccharide-processing protein LpsZ (lpsZ), found in Rhizobium meliloti (Ensifer meliloti).